Consider the following 232-residue polypeptide: Sugar fermentation stimulation protein homolog (232 aa).

Belongs to the SfsA family.

The protein is Sugar fermentation stimulation protein homolog of Acidithiobacillus ferrooxidans (strain ATCC 23270 / DSM 14882 / CIP 104768 / NCIMB 8455) (Ferrobacillus ferrooxidans (strain ATCC 23270)).